The chain runs to 276 residues: Anthranilate synthase beta subunit 1, chloroplastic (276 aa).

Residues Met1–Lys50 constitute a chloroplast transit peptide. One can recognise a Glutamine amidotransferase type-1 domain in the interval Pro74 to Glu273. Cys152 acts as the Nucleophile in catalysis. Residues His247 and Glu249 contribute to the active site.

In terms of assembly, heterotetramer consisting of two non-identical subunits: a beta subunit and a large alpha subunit. Expressed in the central cylinder of mature primary root zones, including pericycle and early lateral root primordia, and vasculature of cotyledons.

It is found in the plastid. It localises to the chloroplast. The catalysed reaction is chorismate + L-glutamine = anthranilate + pyruvate + L-glutamate + H(+). The protein operates within amino-acid biosynthesis; L-tryptophan biosynthesis; L-tryptophan from chorismate: step 1/5. Functionally, part of a heterotetrameric complex that catalyzes the two-step biosynthesis of anthranilate, an intermediate in the biosynthesis of L-tryptophan. In the first step, the glutamine-binding beta subunit of anthranilate synthase (AS) provides the glutamine amidotransferase activity which generates ammonia as a substrate that, along with chorismate, is used in the second step, catalyzed by the large alpha subunit of AS to produce anthranilate. Plays an important regulatory role in auxin production via the tryptophan-dependent biosynthetic pathway. The sequence is that of Anthranilate synthase beta subunit 1, chloroplastic (ASB1) from Arabidopsis thaliana (Mouse-ear cress).